Reading from the N-terminus, the 1220-residue chain is DNA-directed RNA polymerase subunit beta (1220 aa).

It belongs to the RNA polymerase beta chain family. In terms of assembly, the RNAP catalytic core consists of 2 alpha, 1 beta, 1 beta' and 1 omega subunit. When a sigma factor is associated with the core the holoenzyme is formed, which can initiate transcription.

It catalyses the reaction RNA(n) + a ribonucleoside 5'-triphosphate = RNA(n+1) + diphosphate. Its function is as follows. DNA-dependent RNA polymerase catalyzes the transcription of DNA into RNA using the four ribonucleoside triphosphates as substrates. This chain is DNA-directed RNA polymerase subunit beta, found in Mesomycoplasma hyopneumoniae (strain J / ATCC 25934 / NCTC 10110) (Mycoplasma hyopneumoniae).